The following is a 263-amino-acid chain: UPF0328 protein ECU08_2060 (263 aa).

This sequence belongs to the UPF0328 family.

The sequence is that of UPF0328 protein ECU08_2060 from Encephalitozoon cuniculi (strain GB-M1) (Microsporidian parasite).